The chain runs to 328 residues: Malate dehydrogenase 1 (328 aa).

An NAD(+)-binding site is contributed by 12–18; that stretch reads GAAGQIA. Residues Arg-93 and Arg-99 each coordinate substrate. NAD(+)-binding positions include Asn-106, Gln-113, and 130 to 132; that span reads VGN. Residues Asn-132 and Arg-163 each contribute to the substrate site. Catalysis depends on His-188, which acts as the Proton acceptor.

This sequence belongs to the LDH/MDH superfamily. MDH type 2 family.

The catalysed reaction is (S)-malate + NAD(+) = oxaloacetate + NADH + H(+). In terms of biological role, catalyzes the reversible oxidation of malate to oxaloacetate. In Burkholderia vietnamiensis (strain G4 / LMG 22486) (Burkholderia cepacia (strain R1808)), this protein is Malate dehydrogenase 1.